A 192-amino-acid polypeptide reads, in one-letter code: Nucleosome assembly protein 1-like 5 (192 aa).

Over residues 1–12 (MADSQNQGSAEP) the composition is skewed to polar residues. A disordered region spans residues 1–76 (MADSQNQGSA…APKPRNDFIE (76 aa)). Low complexity-rich tracts occupy residues 15-28 (AAAA…AAAA) and 40-55 (GDSD…VVGQ). Residues 86–112 (VLALKKLQKRCDKIEAKFDKEFQALEK) adopt a coiled-coil conformation. Positions 136–192 (AWTLEGDEEDDDDDEYEDEEEGEEEDEEEEEPAAEAAGTAAAKDEGPHSAVPDDAKK) are disordered. Positions 140-168 (EGDEEDDDDDEYEDEEEGEEEDEEEEEPA) are enriched in acidic residues. Residues 177-192 (AKDEGPHSAVPDDAKK) show a composition bias toward basic and acidic residues.

This sequence belongs to the nucleosome assembly protein (NAP) family.

The protein resides in the nucleus. This is Nucleosome assembly protein 1-like 5 (NAP1L5) from Bos taurus (Bovine).